The primary structure comprises 264 residues: Adenosylcobinamide-GDP ribazoletransferase (264 aa).

Transmembrane regions (helical) follow at residues 10-30 (LFFI…VGYT), 43-63 (LVGA…AQVW), 113-133 (LGSY…VALY), 141-161 (VQAL…PVAL), 183-203 (VSDA…AAAW), 205-225 (LGAS…LAAF), and 243-263 (GAAQ…GVWF).

The protein belongs to the CobS family. It depends on Mg(2+) as a cofactor.

The protein resides in the cell inner membrane. The catalysed reaction is alpha-ribazole + adenosylcob(III)inamide-GDP = adenosylcob(III)alamin + GMP + H(+). It catalyses the reaction alpha-ribazole 5'-phosphate + adenosylcob(III)inamide-GDP = adenosylcob(III)alamin 5'-phosphate + GMP + H(+). It participates in cofactor biosynthesis; adenosylcobalamin biosynthesis; adenosylcobalamin from cob(II)yrinate a,c-diamide: step 7/7. In terms of biological role, joins adenosylcobinamide-GDP and alpha-ribazole to generate adenosylcobalamin (Ado-cobalamin). Also synthesizes adenosylcobalamin 5'-phosphate from adenosylcobinamide-GDP and alpha-ribazole 5'-phosphate. The polypeptide is Adenosylcobinamide-GDP ribazoletransferase (Leptothrix cholodnii (strain ATCC 51168 / LMG 8142 / SP-6) (Leptothrix discophora (strain SP-6))).